A 463-amino-acid chain; its full sequence is NADH dehydrogenase [ubiquinone] iron-sulfur protein 2, mitochondrial (463 aa).

A mitochondrion-targeting transit peptide spans 1 to 33; it reads MAALRALCGFRGVAAQVLRPGAGVRLPIQPSRG. Lys62 is subject to N6-acetyllysine. A Symmetric dimethylarginine modification is found at Arg118. 3 residues coordinate [4Fe-4S] cluster: Cys326, Cys332, and Cys347.

Belongs to the complex I 49 kDa subunit family. As to quaternary structure, core subunit of respiratory chain NADH dehydrogenase (Complex I) which is composed of 45 different subunits. Component of the iron-sulfur (IP) fragment of the enzyme. Interacts with NDUFAF3. Interacts with NDUFAF7. Interacts with CERS2. The cofactor is [4Fe-4S] cluster. Dimethylation at Arg-118 by NDUFAF7 takes place after NDUFS2 assembles into the complex I, leading to stabilize the early intermediate complex.

It localises to the mitochondrion inner membrane. It carries out the reaction a ubiquinone + NADH + 5 H(+)(in) = a ubiquinol + NAD(+) + 4 H(+)(out). Its function is as follows. Core subunit of the mitochondrial membrane respiratory chain NADH dehydrogenase (Complex I) which catalyzes electron transfer from NADH through the respiratory chain, using ubiquinone as an electron acceptor. Essential for the catalytic activity and assembly of complex I. Redox-sensitive, critical component of the oxygen-sensing pathway in the pulmonary vasculature which plays a key role in acute pulmonary oxygen-sensing and hypoxic pulmonary vasoconstriction. Plays an important role in carotid body sensing of hypoxia. Essential for glia-like neural stem and progenitor cell proliferation, differentiation and subsequent oligodendrocyte or neuronal maturation. The protein is NADH dehydrogenase [ubiquinone] iron-sulfur protein 2, mitochondrial (NDUFS2) of Pan troglodytes (Chimpanzee).